An 85-amino-acid polypeptide reads, in one-letter code: Large ribosomal subunit protein bL27 (85 aa).

The tract at residues 1–24 (MAHKKAGGSSRNGRDSHSKRLGVK) is disordered.

It belongs to the bacterial ribosomal protein bL27 family.

This Nitrosomonas eutropha (strain DSM 101675 / C91 / Nm57) protein is Large ribosomal subunit protein bL27.